A 408-amino-acid chain; its full sequence is Probable ethanolamine permease EutH (408 aa).

The next 11 membrane-spanning stretches (helical) occupy residues 1–21 (MGINEIIMYIMMFFMLIAAVD), 61–81 (AMVGMTALAPVLAHVLGPVII), 89–109 (ANPSMFAGTLLACDMGGFFLA), 126–146 (ILGSMMGPTIVFSIPVALGII), 155–175 (ALGVLAGIVTIPIGCIAGGLI), 192–212 (FALILMNMIPVLIVAVLVALG), 230–250 (FLVALITIGLAAAVVKFLLGW), 274–294 (IEVIGSISCVLLGAYPMVLLL), 313–333 (NIAAAGMVATLANNIPMFGMM), 342–362 (VINCAFAVSAAFALGDHLGFA), and 369–389 (MIFPMIVGKLIGGVTAIGVAM).

It belongs to the EutH family.

The protein localises to the cell inner membrane. It carries out the reaction ethanolamine(in) = ethanolamine(out). It functions in the pathway amine and polyamine degradation; ethanolamine degradation. Its function is as follows. Probably involved in the diffusion of protonated ethanolamine (EA) into the cell at low pH. At low pH most EA is protonated, and this permease becomes necessary. Contributes to bacterial survival and replication in acidified macrophage vacuoles, but not to bacterial uptake by macrophages. Expression of the eut operon allows this bacteria to use ethanolamine (EA) as a carbon, nitrogen and energy source. It relies on cobalamin (vitamin B12) both as a cofactor for the ethanolamine ammonia-lyase (EAL) activity and to induce the operon. EA enhances bacterial survival in macrophages in a concentration-dependent manner, suggesting it is an important nutrient during infection. The protein is Probable ethanolamine permease EutH of Salmonella typhimurium (strain LT2 / SGSC1412 / ATCC 700720).